A 254-amino-acid chain; its full sequence is Triosephosphate isomerase (254 aa).

9–11 is a binding site for substrate; it reads NWK. His-96 functions as the Electrophile in the catalytic mechanism. Glu-168 (proton acceptor) is an active-site residue. Gly-174 and Ser-213 together coordinate substrate.

The protein belongs to the triosephosphate isomerase family. In terms of assembly, homodimer.

Its subcellular location is the cytoplasm. The catalysed reaction is D-glyceraldehyde 3-phosphate = dihydroxyacetone phosphate. The protein operates within carbohydrate biosynthesis; gluconeogenesis. It participates in carbohydrate degradation; glycolysis; D-glyceraldehyde 3-phosphate from glycerone phosphate: step 1/1. Involved in the gluconeogenesis. Catalyzes stereospecifically the conversion of dihydroxyacetone phosphate (DHAP) to D-glyceraldehyde-3-phosphate (G3P). This is Triosephosphate isomerase from Buchnera aphidicola subsp. Schizaphis graminum (strain Sg).